A 353-amino-acid chain; its full sequence is MRAILPIPVLIAWAMVVCGGAYAVTTCSGAATATADASQQDLAALKARFRRPESVPHPKANPLTPEKVALGKALFFDPRLSRSGSVSCATCHNPSLGWSDGLTRAVGFGMVPLPRRTPPVLNLAWGTAFQWDGRADSLEAQARMPITAPDEMNMSMDLVVERLKAVPGYAPLFRNAFGSEEPIGARHVTAALATFQRTLVSGEAPFDRWALGDESAIGADAKRGFALFTGKAGCAACHSTWRFTDDSFHDIGLKAGNDLGRGKFAPPSVTAMRYAFKTPSLRDLRMEGPYMHDGQLGSLEAVLDHYIKGGEKRPSLSFEMKPFEMSERERRDLVAFLETLKAEPAAITLPQLP.

A signal peptide spans 1 to 23 (MRAILPIPVLIAWAMVVCGGAYA). 7 residues coordinate heme c: Cys-88, Cys-91, His-92, Cys-234, Cys-237, His-238, and His-292.

Post-translationally, binds 2 heme c groups covalently per subunit.

The protein localises to the periplasm. It participates in one-carbon metabolism; methylamine degradation. Its function is as follows. Involved in methylamine metabolism. Essential for the maturation of the beta subunit of MADH, presumably via a step in the biosynthesis of tryptophan tryptophylquinone (TTQ), the cofactor of MADH. This Methylorubrum extorquens (strain ATCC 14718 / DSM 1338 / JCM 2805 / NCIMB 9133 / AM1) (Methylobacterium extorquens) protein is Methylamine utilization protein MauG (mauG).